The following is a 932-amino-acid chain: Protein translocase subunit SecA (932 aa).

ATP contacts are provided by residues glutamine 87, 105-109 (GEGKT), and aspartate 515. The Zn(2+) site is built by cysteine 916, cysteine 918, cysteine 927, and histidine 928.

It belongs to the SecA family. In terms of assembly, monomer and homodimer. Part of the essential Sec protein translocation apparatus which comprises SecA, SecYEG and auxiliary proteins SecDF-YajC and YidC. Zn(2+) is required as a cofactor.

The protein resides in the cell inner membrane. It is found in the cytoplasm. The catalysed reaction is ATP + H2O + cellular proteinSide 1 = ADP + phosphate + cellular proteinSide 2.. In terms of biological role, part of the Sec protein translocase complex. Interacts with the SecYEG preprotein conducting channel. Has a central role in coupling the hydrolysis of ATP to the transfer of proteins into and across the cell membrane, serving both as a receptor for the preprotein-SecB complex and as an ATP-driven molecular motor driving the stepwise translocation of polypeptide chains across the membrane. This is Protein translocase subunit SecA from Burkholderia orbicola (strain AU 1054).